The following is a 163-amino-acid chain: Nucleotide-binding protein GTNG_0630 (163 aa).

Belongs to the YajQ family.

Functionally, nucleotide-binding protein. The chain is Nucleotide-binding protein GTNG_0630 from Geobacillus thermodenitrificans (strain NG80-2).